Reading from the N-terminus, the 338-residue chain is 2-methyl-6-phytyl-1,4-hydroquinone methyltransferase, chloroplastic (338 aa).

A chloroplast-targeting transit peptide spans Met-1–Ser-51. Residues Ser-52–Arg-307 lie on the Chloroplast intermembrane side of the membrane. Residues Val-114–Phe-123 are SAM motif I. An SAM motif II region spans residues Cys-159–Pro-172. The segment at Arg-200–Pro-213 is SAM motif III. A helical membrane pass occupies residues Phe-308 to Lys-328. Residues Asp-329–Ile-338 are Stromal-facing.

This sequence belongs to the class I-like SAM-binding methyltransferase superfamily. MPBQ/MBSQ MT family.

The protein resides in the plastid. It is found in the chloroplast inner membrane. It carries out the reaction 2-methyl-6-phytyl-1,4-benzene-1,4-diol + S-adenosyl-L-methionine = 2,3-dimethyl-6-phytylbenzene-1,4-diol + S-adenosyl-L-homocysteine + H(+). It catalyses the reaction 2-methyl-6-(all-trans-nonaprenyl)benzene-1,4-diol + S-adenosyl-L-methionine = plastoquinol-9 + S-adenosyl-L-homocysteine + H(+). The catalysed reaction is 6-geranylgeranyl-2-methylbenzene-1,4-diol + S-adenosyl-L-methionine = 6-geranylgeranyl-2,3-dimethylbenzene-1,4-diol + S-adenosyl-L-homocysteine + H(+). It participates in cofactor biosynthesis; tocopherol biosynthesis. In terms of biological role, involved in a key methylation step in both tocopherols (vitamin E) and plastoquinone synthesis. Catalyzes the conversion of 2-methyl-6-phytyl-1,4-hydroquinone (MPBQ) to 2,3-dimethyl-6-phytyl-1,4-hydroquinone (DMPQ, a substrate for tocopherol cyclase), and 2-methyl-6-solanyl-1,4-benzoquinone (MSBQ) to plastoquinone. The polypeptide is 2-methyl-6-phytyl-1,4-hydroquinone methyltransferase, chloroplastic (VTE3) (Arabidopsis thaliana (Mouse-ear cress)).